The following is a 312-amino-acid chain: Methionyl-tRNA formyltransferase (312 aa).

Residue 109–112 (SLLP) coordinates (6S)-5,6,7,8-tetrahydrofolate.

The protein belongs to the Fmt family.

It catalyses the reaction L-methionyl-tRNA(fMet) + (6R)-10-formyltetrahydrofolate = N-formyl-L-methionyl-tRNA(fMet) + (6S)-5,6,7,8-tetrahydrofolate + H(+). Its function is as follows. Attaches a formyl group to the free amino group of methionyl-tRNA(fMet). The formyl group appears to play a dual role in the initiator identity of N-formylmethionyl-tRNA by promoting its recognition by IF2 and preventing the misappropriation of this tRNA by the elongation apparatus. The sequence is that of Methionyl-tRNA formyltransferase from Anaeromyxobacter dehalogenans (strain 2CP-C).